Consider the following 181-residue polypeptide: MENRNRNSRPIKNQDPVNEFIRAHQVLVIDEDKQNLGVMSKRQALEIAKSKNLDLYQVGVQPDGTVITRIVNFGKLKYEQQKKSKEAKKHQTKIENKEIRITVNIGKHDLETKARKAKEFLEEGSRVKVSLKFRGREVVYLDLGQQTLNNFFELVSDVGKMEKEAKLNGKFLDMYIVPKKN.

The protein belongs to the IF-3 family. In terms of assembly, monomer.

It localises to the cytoplasm. IF-3 binds to the 30S ribosomal subunit and shifts the equilibrium between 70S ribosomes and their 50S and 30S subunits in favor of the free subunits, thus enhancing the availability of 30S subunits on which protein synthesis initiation begins. The polypeptide is Translation initiation factor IF-3 (Mycoplasma capricolum subsp. capricolum (strain California kid / ATCC 27343 / NCTC 10154)).